A 349-amino-acid polypeptide reads, in one-letter code: ATPase GET3 (349 aa).

ATP is bound at residue 26–33; it reads KGGVGKTT. D57 is an active-site residue. ATP-binding residues include E240 and N267. The Zn(2+) site is built by C280 and C283.

This sequence belongs to the arsA ATPase family. As to quaternary structure, homodimer. Component of the Golgi to ER traffic (GET) complex, which is composed of GET1, GET2 and GET3. Within the complex, GET1 and GET2 form a heterotetramer which is stabilized by phosphatidylinositol binding and which binds to the GET3 homodimer. Interacts with the chloride channel protein GEF1.

It localises to the cytoplasm. The protein localises to the endoplasmic reticulum. The protein resides in the golgi apparatus. ATPase required for the post-translational delivery of tail-anchored (TA) proteins to the endoplasmic reticulum. Recognizes and selectively binds the transmembrane domain of TA proteins in the cytosol. This complex then targets to the endoplasmic reticulum by membrane-bound receptors GET1 and GET2, where the tail-anchored protein is released for insertion. This process is regulated by ATP binding and hydrolysis. ATP binding drives the homodimer towards the closed dimer state, facilitating recognition of newly synthesized TA membrane proteins. ATP hydrolysis is required for insertion. Subsequently, the homodimer reverts towards the open dimer state, lowering its affinity for the GET1-GET2 receptor, and returning it to the cytosol to initiate a new round of targeting. Cooperates with the HDEL receptor ERD2 to mediate the ATP-dependent retrieval of resident ER proteins that contain a C-terminal H-D-E-L retention signal from the Golgi to the ER. Involved in low-level resistance to the oxyanions arsenite and arsenate, and in heat tolerance. The sequence is that of ATPase GET3 from Kluyveromyces lactis (strain ATCC 8585 / CBS 2359 / DSM 70799 / NBRC 1267 / NRRL Y-1140 / WM37) (Yeast).